We begin with the raw amino-acid sequence, 390 residues long: Tumor susceptibility gene 101 protein (390 aa).

Alanine 2 is modified (N-acetylalanine). Residues 2–145 enclose the UEV domain; sequence AVSESQLKKM…GDEPPVFSRP (144 aa). Positions 158 to 162 are interaction with CEP55; it reads PPNTS. A compositionally biased stretch (polar residues) spans 198 to 214; that stretch reads ATTSSQYPSQPPVTTVG. A disordered region spans residues 198 to 220; sequence ATTSSQYPSQPPVTTVGPSRDGT. The residue at position 220 (threonine 220) is a Phosphothreonine. Residues 235–316 adopt a coiled-coil conformation; that stretch reads SDKLRWRMKE…NQSENNDIDE (82 aa). The PTAP motif motif lies at 320 to 323; sequence PTAP. Residues 322-390 form the SB domain; it reads APLYKQILNL…RKTAGLSDLY (69 aa).

It belongs to the ubiquitin-conjugating enzyme family. UEV subfamily. Component of the ESCRT-I complex (endosomal sorting complex required for transport I) which consists of TSG101, VPS28, a VPS37 protein (VPS37A to -D) and MVB12A or MVB12B in a 1:1:1:1 stoichiometry. Interacts with VPS37A, VPS37B and VPS37C. Interacts with DMAP1. Interacts with ubiquitin. Interacts with stathmin, GMCL and AATF. Component of an ESCRT-I complex (endosomal sorting complex required for transport I) which consists of TSG101, VPS28, VPS37A and UBAP1 in a 1:1:1:1 stoichiometry. Interacts with HGS; the interaction mediates the association with the ESCRT-0 complex. Interacts with GGA1 and GGA3. Interacts (via UEV domain) with PDCD6IP/AIP1. Interacts with VPS28, SNF8 and VPS36. Self-associates. Interacts with MVB12A; the association appears to be mediated by the TSG101-VPS37 binary subcomplex. Interacts with VPS37D. Interacts with LRSAM1. Interacts with CEP55; the interaction is required for cytokinesis but not for viral budding. Interacts with PDCD6. Interacts with LITAF. Interacts with MGRN1. Interacts with ARRDC1; recruits TSG101 to the plasma membrane. As to quaternary structure, (Microbial infection) Interacts with HIV-1 p6. In terms of assembly, (Microbial infection) Interacts with human spumavirus Gag. (Microbial infection) Interacts with HTLV-1 Gag. As to quaternary structure, (Microbial infection) Interacts with Ebola virus VP40. In terms of assembly, (Microbial infection) Interacts with EIAV p9; the interaction has been shown in vitro. (Microbial infection) Interacts with Lassa virus protein Z. As to quaternary structure, (Microbial infection) Interacts with hepatitis E virus protein ORF3. In terms of processing, monoubiquitinated at multiple sites by LRSAM1 and by MGRN1. Ubiquitination inactivates it, possibly by regulating its shuttling between an active membrane-bound protein and an inactive soluble form. Ubiquitination by MGRN1 requires the presence of UBE2D1. As to expression, heart, brain, placenta, lung, liver, skeletal, kidney and pancreas.

The protein resides in the cytoplasm. It is found in the early endosome membrane. The protein localises to the late endosome membrane. Its subcellular location is the cytoskeleton. It localises to the microtubule organizing center. The protein resides in the centrosome. It is found in the midbody. The protein localises to the midbody ring. Its subcellular location is the nucleus. Functionally, component of the ESCRT-I complex, a regulator of vesicular trafficking process. Binds to ubiquitinated cargo proteins and is required for the sorting of endocytic ubiquitinated cargos into multivesicular bodies (MVBs). Mediates the association between the ESCRT-0 and ESCRT-I complex. Required for completion of cytokinesis; the function requires CEP55. May be involved in cell growth and differentiation. Acts as a negative growth regulator. Involved in the budding of many viruses through an interaction with viral proteins that contain a late-budding motif P-[ST]-A-P. This interaction is essential for viral particle budding of numerous retroviruses. Required for the exosomal release of SDCBP, CD63 and syndecan. It may also play a role in the extracellular release of microvesicles that differ from the exosomes. The chain is Tumor susceptibility gene 101 protein (TSG101) from Homo sapiens (Human).